The primary structure comprises 105 residues: Iron-sulfur cluster assembly protein CyaY (105 aa).

This sequence belongs to the frataxin family.

Involved in iron-sulfur (Fe-S) cluster assembly. May act as a regulator of Fe-S biogenesis. The protein is Iron-sulfur cluster assembly protein CyaY of Paraburkholderia phytofirmans (strain DSM 17436 / LMG 22146 / PsJN) (Burkholderia phytofirmans).